Reading from the N-terminus, the 124-residue chain is Fluoride-specific ion channel FluC (124 aa).

Transmembrane regions (helical) follow at residues 1 to 21 (MVPL…LRFA), 38 to 58 (TLAV…LFLI), 69 to 89 (GLMV…LDTV), and 99 to 119 (LALG…WAGL). The Na(+) site is built by Gly76 and Thr79.

Belongs to the fluoride channel Fluc/FEX (TC 1.A.43) family.

Its subcellular location is the cell inner membrane. It carries out the reaction fluoride(in) = fluoride(out). Na(+) is not transported, but it plays an essential structural role and its presence is essential for fluoride channel function. Fluoride-specific ion channel. Important for reducing fluoride concentration in the cell, thus reducing its toxicity. In Pseudomonas fluorescens (strain Pf0-1), this protein is Fluoride-specific ion channel FluC.